A 1189-amino-acid chain; its full sequence is Intraflagellar transport protein 122 homolog (1189 aa).

WD repeat units follow at residues 16–54 (KLEQ…MIQP), 57–97 (GHKD…LKYT), 99–135 (NDSI…VSKH), 137–175 (VSSK…KVKI), 180–223 (GALS…VGKD), 225–264 (VLGF…LGPI), 266–306 (EQNS…HGLY), and 459–498 (KQAT…LLFQ).

Component of the IFT complex A (IFT-A) complex.

It localises to the cell projection. The protein resides in the cilium. The protein localises to the cytoplasm. Its subcellular location is the cytoskeleton. It is found in the cilium basal body. Its function is as follows. Required for cilia formation during embryonal development. Acts as a negative regulator of Shh signaling. The protein is Intraflagellar transport protein 122 homolog (ift122) of Xenopus tropicalis (Western clawed frog).